The primary structure comprises 1105 residues: Lysylphosphatidylglycerol biosynthesis bifunctional protein LysX (1105 aa).

Positions 1–603 (MTVTKPRSVQ…LLHHDGSAPD (603 aa)) are phosphatidylglycerol lysyltransferase. 7 consecutive transmembrane segments (helical) span residues 20-40 (VPAA…LASI), 62-82 (FPDT…ALAA), 86-106 (IAWL…AADI), 117-137 (FGEN…VLGY), 154-174 (AVLV…VDLF), 186-203 (YVAN…DLFT), and 208-228 (VFLN…ATIV). The interval 604–1105 (VSGLRQSAIA…TLPFPLAKPH (502 aa)) is lysine--tRNA ligase. Residues D1017 and E1024 each contribute to the Mg(2+) site.

In the N-terminal section; belongs to the LPG synthetase family. The protein in the C-terminal section; belongs to the class-II aminoacyl-tRNA synthetase family. The cofactor is Mg(2+).

Its subcellular location is the cell membrane. The enzyme catalyses tRNA(Lys) + L-lysine + ATP = L-lysyl-tRNA(Lys) + AMP + diphosphate. The catalysed reaction is L-lysyl-tRNA(Lys) + a 1,2-diacyl-sn-glycero-3-phospho-(1'-sn-glycerol) = a 1,2-diacyl-sn-glycero-3-phospho-1'-(3'-O-L-lysyl)-sn-glycerol + tRNA(Lys). Catalyzes the production of L-lysyl-tRNA(Lys)transfer and the transfer of a lysyl group from L-lysyl-tRNA(Lys) to membrane-bound phosphatidylglycerol (PG), which produces lysylphosphatidylglycerol (LPG), one of the components of the bacterial membrane with a positive net charge. LPG synthesis contributes to the resistance to cationic antimicrobial peptides (CAMPs) and likely protects M.tuberculosis against the CAMPs produced by competiting microorganisms (bacteriocins). In fact, the modification of anionic phosphatidylglycerol with positively charged L-lysine results in repulsion of the peptides. This Mycobacterium ulcerans (strain Agy99) protein is Lysylphosphatidylglycerol biosynthesis bifunctional protein LysX (lysX).